Reading from the N-terminus, the 373-residue chain is 8-amino-7-oxononanoate synthase (373 aa).

Residue Arg16 participates in substrate binding. A pyridoxal 5'-phosphate-binding site is contributed by 93–94; sequence GF. Substrate is bound at residue His118. Pyridoxal 5'-phosphate is bound by residues Ser165, 190-193, and 222-225; these read DEAH and TFSK. An N6-(pyridoxal phosphate)lysine modification is found at Lys225. Residue Thr334 participates in substrate binding.

It belongs to the class-II pyridoxal-phosphate-dependent aminotransferase family. BioF subfamily. As to quaternary structure, homodimer. Requires pyridoxal 5'-phosphate as cofactor.

It carries out the reaction 6-carboxyhexanoyl-[ACP] + L-alanine + H(+) = (8S)-8-amino-7-oxononanoate + holo-[ACP] + CO2. The protein operates within cofactor biosynthesis; biotin biosynthesis. Its function is as follows. Catalyzes the decarboxylative condensation of pimeloyl-[acyl-carrier protein] and L-alanine to produce 8-amino-7-oxononanoate (AON), [acyl-carrier protein], and carbon dioxide. The protein is 8-amino-7-oxononanoate synthase of Helicobacter pylori (strain J99 / ATCC 700824) (Campylobacter pylori J99).